The sequence spans 556 residues: Formate--tetrahydrofolate ligase (556 aa).

ATP is bound at residue T65 to S72.

The protein belongs to the formate--tetrahydrofolate ligase family.

It carries out the reaction (6S)-5,6,7,8-tetrahydrofolate + formate + ATP = (6R)-10-formyltetrahydrofolate + ADP + phosphate. It functions in the pathway one-carbon metabolism; tetrahydrofolate interconversion. The protein is Formate--tetrahydrofolate ligase of Streptococcus equi subsp. zooepidemicus (strain H70).